Consider the following 191-residue polypeptide: Putative resolvase L103 (191 aa).

Residues 11–30 (LEVLKVHYQTLYRMEEKGLI) constitute a DNA-binding region (H-T-H motif). Positions 59 to 191 (KGICYCRVSS…KKSGKLKAKK (133 aa)) constitute a Resolvase/invertase-type recombinase catalytic domain. Positions 65–91 (RVSSKKQIKDLNRQVEYMEKNYPEYEI) form a coiled coil. The O-(5'-phospho-DNA)-serine intermediate role is filled by S67.

The protein belongs to the site-specific recombinase resolvase family.

Resolvase catalyzes the resolution (a site-specific recombination) of the cointegrated replicon to yield the final transposition products. The chain is Putative resolvase L103 from Acanthamoeba polyphaga (Amoeba).